The chain runs to 487 residues: 1-hydroxycarotenoid 3,4-desaturase (487 aa).

Residues glycine 12, glutamate 31, lysine 39, serine 55–leucine 56, valine 247, asparagine 275, leucine 431, glycine 461, and glycine 468–isoleucine 469 each bind FAD.

It belongs to the carotenoid/retinoid oxidoreductase family. As to quaternary structure, monomer.

It carries out the reaction rhodopin + A = (3E)-3,4-didehydrorhodopin + AH2. The enzyme catalyses 1'-hydroxy-gamma-carotene + A = 1'-hydroxytorulene + AH2. It catalyses the reaction 1-hydroxy-all-trans-1,2-dihydro-neurosporene + A = demethylspheroidene + AH2. The catalysed reaction is 1,1'-dihydroxy-1,1',2,2'-tetrahydroneurosporene + A = 1'-hydroxy-demethylspheroidene + AH2. It carries out the reaction 1,1'-dihydroxy-1,1',2,2'-tetrahydrolycopene + A = 1,1'-dihydroxy-3,4-didehydro-1,2-dihydrolycopene + AH2. The protein operates within carotenoid biosynthesis. Catalyzes the introduction of a C-3,4 double bond into 1'-hydroxy-gamma-carotene and rhodopin (1-hydroxylycopene) to yield 1'-hydroxytorulene and (3E)-3,4-didehydrorhodopin, respectively. Can also use 1-hydroxy-all-trans-1,2-dihydro-neurosporene, 1,1'-dihydroxy-1,1',2,2'-tetrahydroneurosporene and 1,1'-dihydroxy-1,1',2,2'-tetrahydrolycopene. Probably involved in the synthesis of myxol, a gamma-carotene derivative. May use FAD as a proton acceptor. This chain is 1-hydroxycarotenoid 3,4-desaturase, found in Nonlabens dokdonensis (strain DSM 17205 / KCTC 12402 / DSW-6) (Donghaeana dokdonensis).